A 168-amino-acid chain; its full sequence is Sensor histidine kinase component HK1 (168 aa).

The Histidine kinase; second part domain maps to 1–141 (MPITPLLHES…ELRITLPTPR (141 aa)). Residues 137 to 168 (LPTPRPPFHEELPRITSSDTKDPNREHDTSDQ) form a disordered region. A compositionally biased stretch (basic and acidic residues) spans 143 to 168 (PFHEELPRITSSDTKDPNREHDTSDQ).

As to quaternary structure, interacts with HK2.

The catalysed reaction is ATP + protein L-histidine = ADP + protein N-phospho-L-histidine.. Member of the three-protein two-component system HK1/HK2/TcrA. Kinase that binds ATP and catalyzes the transfer of a phosphoryl group from ATP to HK2. The sequence is that of Sensor histidine kinase component HK1 from Mycobacterium tuberculosis (strain ATCC 25618 / H37Rv).